A 95-amino-acid polypeptide reads, in one-letter code: Aspartyl/glutamyl-tRNA(Asn/Gln) amidotransferase subunit C (95 aa).

It belongs to the GatC family. Heterotrimer of A, B and C subunits.

The catalysed reaction is L-glutamyl-tRNA(Gln) + L-glutamine + ATP + H2O = L-glutaminyl-tRNA(Gln) + L-glutamate + ADP + phosphate + H(+). The enzyme catalyses L-aspartyl-tRNA(Asn) + L-glutamine + ATP + H2O = L-asparaginyl-tRNA(Asn) + L-glutamate + ADP + phosphate + 2 H(+). Allows the formation of correctly charged Asn-tRNA(Asn) or Gln-tRNA(Gln) through the transamidation of misacylated Asp-tRNA(Asn) or Glu-tRNA(Gln) in organisms which lack either or both of asparaginyl-tRNA or glutaminyl-tRNA synthetases. The reaction takes place in the presence of glutamine and ATP through an activated phospho-Asp-tRNA(Asn) or phospho-Glu-tRNA(Gln). The protein is Aspartyl/glutamyl-tRNA(Asn/Gln) amidotransferase subunit C of Pelobacter propionicus (strain DSM 2379 / NBRC 103807 / OttBd1).